The primary structure comprises 237 residues: Purine nucleoside phosphorylase DeoD-type (237 aa).

His4 is an a purine D-ribonucleoside binding site. Residues Gly20, Arg24, Arg43, and 87–90 each bind phosphate; that span reads RVGT. Residues 179 to 181 and 203 to 204 contribute to the a purine D-ribonucleoside site; these read EME and SD. The Proton donor role is filled by Asp204.

This sequence belongs to the PNP/UDP phosphorylase family. As to quaternary structure, homohexamer; trimer of homodimers.

The enzyme catalyses a purine D-ribonucleoside + phosphate = a purine nucleobase + alpha-D-ribose 1-phosphate. It catalyses the reaction a purine 2'-deoxy-D-ribonucleoside + phosphate = a purine nucleobase + 2-deoxy-alpha-D-ribose 1-phosphate. Functionally, catalyzes the reversible phosphorolytic breakdown of the N-glycosidic bond in the beta-(deoxy)ribonucleoside molecules, with the formation of the corresponding free purine bases and pentose-1-phosphate. This Streptococcus pyogenes serotype M4 (strain MGAS10750) protein is Purine nucleoside phosphorylase DeoD-type.